A 132-amino-acid polypeptide reads, in one-letter code: uncharacterized protein (132 aa).

This sequence to M.jannaschii MJ0661.

This is an uncharacterized protein from Helicobacter pylori (strain ATCC 700392 / 26695) (Campylobacter pylori).